Reading from the N-terminus, the 134-residue chain is RxLR effector protein Avh238 (134 aa).

The first 21 residues, 1-21 (MRGVFFVAVAVAIFARSSAEA), serve as a signal peptide directing secretion. The short motif at 44 to 68 (RFLRVADSEDDDLAAPADDGKTEER) is the RxLR-dEER element. Positions 50-72 (DSEDDDLAAPADDGKTEERAPKF) are disordered. A compositionally biased stretch (basic and acidic residues) spans 61-70 (DDGKTEERAP).

It belongs to the RxLR effector family.

The protein localises to the secreted. It localises to the host cytoplasm. The protein resides in the host nucleus. Its function is as follows. Effector that, due to the lack of a histidine residue at position 79, is not able to induce cell death in tomato, tobacco, eggplant, potato, or in A.thaliana. The polypeptide is RxLR effector protein Avh238 (Phytophthora sojae (Soybean stem and root rot agent)).